The chain runs to 34 residues: Photosystem II reaction center protein M (34 aa).

The chain crosses the membrane as a helical span at residues I5 to I25.

Belongs to the PsbM family. In terms of assembly, PSII is composed of 1 copy each of membrane proteins PsbA, PsbB, PsbC, PsbD, PsbE, PsbF, PsbH, PsbI, PsbJ, PsbK, PsbL, PsbM, PsbT, PsbX, PsbY, PsbZ, Psb30/Ycf12, at least 3 peripheral proteins of the oxygen-evolving complex and a large number of cofactors. It forms dimeric complexes.

It is found in the plastid. It localises to the chloroplast thylakoid membrane. In terms of biological role, one of the components of the core complex of photosystem II (PSII). PSII is a light-driven water:plastoquinone oxidoreductase that uses light energy to abstract electrons from H(2)O, generating O(2) and a proton gradient subsequently used for ATP formation. It consists of a core antenna complex that captures photons, and an electron transfer chain that converts photonic excitation into a charge separation. This subunit is found at the monomer-monomer interface. This Piper cenocladum (Ant piper) protein is Photosystem II reaction center protein M.